The sequence spans 644 residues: MNIIEIKQLNRYFGEGENRVHVLKDISLSIERGDFVAIMGQSGSGKSTLMNIIGCLDTATGGSSKIDGKETIELTNDQLSDLRSQKFGFIFQRYNLLSSLTAAENVALPAIYAGMPQSQRLERAKQLLEKLGLGDKWQNKPNQLSGGQQQRVSIARALMNGGEIILADEPTGALDSHSGENVMEILRQLHEEGHTIIMVTHDKHIAASANRIIEIKDGEIISDTQKRQVKSAVKNPSVFKGRFGFSKDQLMEAFRMSVSAIVAHKMRSLLTMLGIIIGITSVVSVVALGNGSQQKILENIRGIGTNTMTIFNGNGFGDRRSRHIQNLKISDANTLSKQSYIQSVTPNTSSSGILVVGNKSFTSANLYGIGEQYFDVEGLKLKQGRLLTEDDVDQSNQVVVLDESAKKAIFANENPLGKTVIFNKRPFRVIGVVSDQQLGGFPGNSLNLYSPYSTVLNKITGGSRIGSITVKISDDVNSTVAEKSLTELLKSLHGKKDFFIMNSDTIKQTIENTTGTMKLLISSIAFISLIVGGIGVMNIMLVSVTERTKEIGVRMAIGARQINILQQFLIEAVLICLIGGVAGILLSVLIGVLFNSFITDFSMDFSTASIVTAVLFSTLIGVLFGYMPAKKAAELNPITALAQE.

At 1-268 (MNIIEIKQLN…SAIVAHKMRS (268 aa)) the chain is on the cytoplasmic side. The ABC transporter domain maps to 4 to 242 (IEIKQLNRYF…VKNPSVFKGR (239 aa)). 40–47 (GQSGSGKS) contributes to the ATP binding site. The helical transmembrane segment at 269–289 (LLTMLGIIIGITSVVSVVALG) threads the bilayer. Over 290–523 (NGSQQKILEN…TGTMKLLISS (234 aa)) the chain is Periplasmic. The chain crosses the membrane as a helical span at residues 524–544 (IAFISLIVGGIGVMNIMLVSV). Topologically, residues 545-573 (TERTKEIGVRMAIGARQINILQQFLIEAV) are cytoplasmic. The helical transmembrane segment at 574–594 (LICLIGGVAGILLSVLIGVLF) threads the bilayer. Over 595-607 (NSFITDFSMDFST) the chain is Periplasmic. Residues 608–628 (ASIVTAVLFSTLIGVLFGYMP) form a helical membrane-spanning segment. At 629 to 644 (AKKAAELNPITALAQE) the chain is on the cytoplasmic side.

Belongs to the ABC transporter superfamily. Macrolide exporter (TC 3.A.1.122) family. As to quaternary structure, homodimer. Part of the tripartite efflux system MacAB-TdeA, which is composed of an inner membrane transporter, MacB, a periplasmic membrane fusion protein, MacA, and an outer membrane component, TdeA. The complex forms a large protein conduit and can translocate molecules across both the inner and outer membranes. Interacts with MacA.

The protein localises to the cell inner membrane. Its function is as follows. Part of the tripartite efflux system MacAB-TdeA. MacB is a non-canonical ABC transporter that contains transmembrane domains (TMD), which form a pore in the inner membrane, and an ATP-binding domain (NBD), which is responsible for energy generation. Confers resistance against macrolides. The protein is Macrolide export ATP-binding/permease protein MacB of Aggregatibacter actinomycetemcomitans (Actinobacillus actinomycetemcomitans).